A 90-amino-acid chain; its full sequence is Auxin-responsive protein SAUR24 (90 aa).

It belongs to the ARG7 family.

The protein localises to the cell membrane. Functions as a positive effector of cell expansion through modulation of auxin transport. This is Auxin-responsive protein SAUR24 from Arabidopsis thaliana (Mouse-ear cress).